The sequence spans 274 residues: Undecaprenyl-diphosphatase 1 (274 aa).

Transmembrane regions (helical) follow at residues 8–28 (WLLI…PIPV), 45–65 (IEGL…VIAI), 92–112 (FRIS…ALLF), 120–140 (LKQL…LWLI), 195–215 (FSFF…ISDI), 230–250 (IAFI…MNIM), and 253–273 (GKLI…LSLL).

Belongs to the UppP family.

It localises to the cell membrane. The catalysed reaction is di-trans,octa-cis-undecaprenyl diphosphate + H2O = di-trans,octa-cis-undecaprenyl phosphate + phosphate + H(+). Catalyzes the dephosphorylation of undecaprenyl diphosphate (UPP). Confers resistance to bacitracin. The sequence is that of Undecaprenyl-diphosphatase 1 from Halalkalibacterium halodurans (strain ATCC BAA-125 / DSM 18197 / FERM 7344 / JCM 9153 / C-125) (Bacillus halodurans).